A 178-amino-acid polypeptide reads, in one-letter code: MAHEILDGSSMQRALTRITYEIIEQNKGVDNLVFVGIKTRGVYLAKRLAKRLNQLENVEIPVAPLDVSLYRDDRHVPDHTQEPTVKTDQLDIDITNKHVILVDDVLFTGRTVRAALDALMDMGRPTRISLAVLVDRGHRELPIRPDFVGKNIPTAMNETVHVAVEEYDGHEDVTIEHN.

Residues 99-111 (VILVDDVLFTGRT) carry the PRPP-binding motif.

Belongs to the purine/pyrimidine phosphoribosyltransferase family. PyrR subfamily. Homodimer and homohexamer; in equilibrium.

The catalysed reaction is UMP + diphosphate = 5-phospho-alpha-D-ribose 1-diphosphate + uracil. Its function is as follows. Regulates transcriptional attenuation of the pyrimidine nucleotide (pyr) operon by binding in a uridine-dependent manner to specific sites on pyr mRNA. This disrupts an antiterminator hairpin in the RNA and favors formation of a downstream transcription terminator, leading to a reduced expression of downstream genes. In terms of biological role, also displays a weak uracil phosphoribosyltransferase activity which is not physiologically significant. This chain is Bifunctional protein PyrR, found in Limosilactobacillus reuteri subsp. reuteri (strain JCM 1112) (Lactobacillus reuteri).